A 732-amino-acid chain; its full sequence is MMSGVMTAVSNRWDPGVIRALAEARHGDAFAVLGAHRTDTGRVLRTYLPGAERVSAVLDDGQTIALEAGPEPGLFAGDLPAQGGYRLRIGWPGGEQDTADPYAFGPQLSDFDLHLISEGHHLQLADALGANVVEVDGVRGTRFAVWAPNASRVAVVGDFNSWDARRHPMRLRHQSGVWELFVPDVGPGAHYKYQLRGPHGHELPAKADPVARRAELAPGTASIVADPTPYQWSDDGWMATRARRQAHDAPMSVYEMHAGSWLREEGVDLDWDGLADHLIPYVADMGFTHVELMPVTEHPFGGSWGYQPLGLFAPTARFGTPDGFARFVDRCHREGIGVIVDWVPAHFPTDAHGLAHFDGTALYEHADPREGFHRDWNTLIYNHGRREVSGFLIASAMEFLQRYHVDGLRVDAVASMLYRDYSRNAGEWVPNIHGGRENYETIAFLRRLNALVREHTPGAVMIAEESTAFPGVTADVAHGGLGFHYKWNMGWMHDTLHYASLDPIYRRYHHGELTFSMVYAYSERFVLPISHDEVVHGKGSLLGRMPGDDWQRFANLRAYLGFMFTHPGRKLLFMGCEFGQPTEWNHDSGLPWHLLDDPRHRGVQTLVRDVNRLYVQYPALHAHDDDPSGFAWVVGDDAGNSVVAFLRKGKRGDAPVLVVINFTPVVQHGYRIGVPQGGQWREVFNSDAGIYGGANLGNGGIVTAEQQSMHGHAHALPLLLPPLGAIVLTPPG.

The active-site Nucleophile is D411. Residue E464 is the Proton donor of the active site.

It belongs to the glycosyl hydrolase 13 family. GlgB subfamily. Monomer.

The catalysed reaction is Transfers a segment of a (1-&gt;4)-alpha-D-glucan chain to a primary hydroxy group in a similar glucan chain.. Its pathway is glycan biosynthesis; glycogen biosynthesis. Its function is as follows. Catalyzes the formation of the alpha-1,6-glucosidic linkages in glycogen by scission of a 1,4-alpha-linked oligosaccharide from growing alpha-1,4-glucan chains and the subsequent attachment of the oligosaccharide to the alpha-1,6 position. This is 1,4-alpha-glucan branching enzyme GlgB 1 from Xanthomonas oryzae pv. oryzae (strain KACC10331 / KXO85).